A 453-amino-acid polypeptide reads, in one-letter code: tRNA-2-methylthio-N(6)-dimethylallyladenosine synthase (453 aa).

One can recognise an MTTase N-terminal domain in the interval K4–K118. Residues C13, C49, C83, C156, C160, and C163 each contribute to the [4Fe-4S] cluster site. The Radical SAM core domain occupies E142 to R388. The TRAM domain occupies R390–V453.

It belongs to the methylthiotransferase family. MiaB subfamily. Monomer. [4Fe-4S] cluster is required as a cofactor.

The protein localises to the cytoplasm. The catalysed reaction is N(6)-dimethylallyladenosine(37) in tRNA + (sulfur carrier)-SH + AH2 + 2 S-adenosyl-L-methionine = 2-methylsulfanyl-N(6)-dimethylallyladenosine(37) in tRNA + (sulfur carrier)-H + 5'-deoxyadenosine + L-methionine + A + S-adenosyl-L-homocysteine + 2 H(+). In terms of biological role, catalyzes the methylthiolation of N6-(dimethylallyl)adenosine (i(6)A), leading to the formation of 2-methylthio-N6-(dimethylallyl)adenosine (ms(2)i(6)A) at position 37 in tRNAs that read codons beginning with uridine. This chain is tRNA-2-methylthio-N(6)-dimethylallyladenosine synthase, found in Karelsulcia muelleri (strain GWSS) (Sulcia muelleri).